We begin with the raw amino-acid sequence, 253 residues long: Imidazole glycerol phosphate synthase subunit HisF (253 aa).

Active-site residues include D11 and D130.

This sequence belongs to the HisA/HisF family. Heterodimer of HisH and HisF.

Its subcellular location is the cytoplasm. It carries out the reaction 5-[(5-phospho-1-deoxy-D-ribulos-1-ylimino)methylamino]-1-(5-phospho-beta-D-ribosyl)imidazole-4-carboxamide + L-glutamine = D-erythro-1-(imidazol-4-yl)glycerol 3-phosphate + 5-amino-1-(5-phospho-beta-D-ribosyl)imidazole-4-carboxamide + L-glutamate + H(+). The protein operates within amino-acid biosynthesis; L-histidine biosynthesis; L-histidine from 5-phospho-alpha-D-ribose 1-diphosphate: step 5/9. In terms of biological role, IGPS catalyzes the conversion of PRFAR and glutamine to IGP, AICAR and glutamate. The HisF subunit catalyzes the cyclization activity that produces IGP and AICAR from PRFAR using the ammonia provided by the HisH subunit. The sequence is that of Imidazole glycerol phosphate synthase subunit HisF from Clostridium botulinum (strain Langeland / NCTC 10281 / Type F).